The sequence spans 678 residues: Endoplasmic reticulum membrane-associated RNA degradation protein (678 aa).

The next 2 helical transmembrane spans lie at 390–410 and 587–607; these read LLAF…LSVF and VLSL…AVCG.

It localises to the endoplasmic reticulum membrane. Functionally, may play a role in neuronal migration during embryonic development. In Homo sapiens (Human), this protein is Endoplasmic reticulum membrane-associated RNA degradation protein (ERMARD).